The sequence spans 477 residues: UDP-N-acetylmuramate--L-alanine ligase (477 aa).

122 to 128 contacts ATP; that stretch reads GTHGKTT.

The protein belongs to the MurCDEF family.

Its subcellular location is the cytoplasm. It catalyses the reaction UDP-N-acetyl-alpha-D-muramate + L-alanine + ATP = UDP-N-acetyl-alpha-D-muramoyl-L-alanine + ADP + phosphate + H(+). The protein operates within cell wall biogenesis; peptidoglycan biosynthesis. In terms of biological role, cell wall formation. This is UDP-N-acetylmuramate--L-alanine ligase from Xylella fastidiosa (strain 9a5c).